The primary structure comprises 366 residues: tRNA-specific 2-thiouridylase MnmA (366 aa).

ATP-binding positions include 10 to 17 (GLSGGVDS) and Ile-36. The active-site Nucleophile is Cys-98. Cys-98 and Cys-194 are joined by a disulfide. Gly-122 serves as a coordination point for ATP. The tract at residues 144-146 (KDQ) is interaction with tRNA. Cys-194 serves as the catalytic Cysteine persulfide intermediate. Positions 303–304 (RY) are interaction with tRNA.

It belongs to the MnmA/TRMU family.

The protein resides in the cytoplasm. It carries out the reaction S-sulfanyl-L-cysteinyl-[protein] + uridine(34) in tRNA + AH2 + ATP = 2-thiouridine(34) in tRNA + L-cysteinyl-[protein] + A + AMP + diphosphate + H(+). Functionally, catalyzes the 2-thiolation of uridine at the wobble position (U34) of tRNA, leading to the formation of s(2)U34. This is tRNA-specific 2-thiouridylase MnmA from Chlorobaculum tepidum (strain ATCC 49652 / DSM 12025 / NBRC 103806 / TLS) (Chlorobium tepidum).